The chain runs to 90 residues: c-Myc-binding protein homolog (90 aa).

It belongs to the AMY1 family.

The protein localises to the nucleus. The chain is c-Myc-binding protein homolog (mycbp) from Dictyostelium discoideum (Social amoeba).